The primary structure comprises 108 residues: UPF0102 protein WS0451 (108 aa).

The protein belongs to the UPF0102 family.

This chain is UPF0102 protein WS0451, found in Wolinella succinogenes (strain ATCC 29543 / DSM 1740 / CCUG 13145 / JCM 31913 / LMG 7466 / NCTC 11488 / FDC 602W) (Vibrio succinogenes).